Consider the following 195-residue polypeptide: Protein GrpE (195 aa).

The protein belongs to the GrpE family. In terms of assembly, homodimer.

It localises to the cytoplasm. Its function is as follows. Participates actively in the response to hyperosmotic and heat shock by preventing the aggregation of stress-denatured proteins, in association with DnaK and GrpE. It is the nucleotide exchange factor for DnaK and may function as a thermosensor. Unfolded proteins bind initially to DnaJ; upon interaction with the DnaJ-bound protein, DnaK hydrolyzes its bound ATP, resulting in the formation of a stable complex. GrpE releases ADP from DnaK; ATP binding to DnaK triggers the release of the substrate protein, thus completing the reaction cycle. Several rounds of ATP-dependent interactions between DnaJ, DnaK and GrpE are required for fully efficient folding. The sequence is that of Protein GrpE from Blochmanniella floridana.